The primary structure comprises 489 residues: MSIPGFGSAEKVNHTASSVTLTIPQSYEWRIEVPFNRILKFKVLTGIVEINGTELANNTEIQLSGTKTYLYSPVTDAVIEYVLVENKDDLSLVSASDEGFVEYLSDESNMDSILNLHMYLESKRQYTKDYNFSSSIDQQQSGPKVLIIGSKYSGKTTVSKILSAYANKMNNTPVLVNLQPRDGVFALPGSLTATPISDSFDVESCNGYGLTTTSGTLVHNPKQPIVKNFGMADFNDNVDFYKLLIEKLGIAVLSRLDQDLNIKNSGVIIDTPALTSKNFDIVESMVSNFLIDNIIVIGNERLAIELTKKFAYKSTQLNIIKLNKSSGCIEVEDRFIRLQQEQTIKEYFNGNFKTRLSPFKTDIELSGLKIYKNVLTKDLLSQMAFLPGGDDFEKDETNPEEDPEKKQLEKYYQAIEDPNSSNLENSIVAITHLPNNDKKLGKDLLNTSVLGYIHVSKFDDQKKRLKVLFPFPGVFPKNVLISTNIGYNE.

Residues Glu28 and 152 to 157 (YSGKTT) contribute to the ATP site.

This sequence belongs to the Clp1 family. Clp1 subfamily. Component of a pre-mRNA cleavage factor complex. Interacts directly with PCF11.

The protein localises to the nucleus. In terms of biological role, required for endonucleolytic cleavage during polyadenylation-dependent pre-mRNA 3'-end formation. The chain is mRNA cleavage and polyadenylation factor CLP1 from Candida albicans (strain SC5314 / ATCC MYA-2876) (Yeast).